A 756-amino-acid polypeptide reads, in one-letter code: MDSGRDFLTLHGLQDDPDLQALLKGSQLLKVKSSSWRRERFYKLQEDCKTIWQESRKVMRSPESQLFSIEDIQEVRMGHRTEGLEKFARDIPEDRCFSIVFKDQRNTLDLIAPSPADAQHWVQGLRKIIHHSGSMDQRQKLQHWIHSCLRKADKNKDNKMNFKELKDFLKELNIQVDDGYARKIFRECDHSQTDSLEDEEIETFYKMLTQRAEIDRAFEEAAGSAETLSVERLVTFLQHQQREEEAGPALALSLIERYEPSETAKAQRQMTKDGFLMYLLSADGNAFSLAHRRVYQDMDQPLSHYLVSSSHNTYLLEDQLTGPSSTEAYIRALCKGCRCLELDCWDGPNQEPIIYHGYTFTSKILFCDVLRAIRDYAFKASPYPVILSLENHCSLEQQRVMARHLRAILGPILLDQPLDGVTTSLPSPEQLKGKILLKGKKLGGLLPAGGENGSEATDVSDEVEAAEMEDEAVRSQVQHKPKEDKLKLVPELSDMIIYCKSVHFGGFSSPGTSGQAFYEMASFSESRALRLLQESGNGFVRHNVSCLSRIYPAGWRTDSSNYSPVEMWNGGCQIVALNFQTPGPEMDVYLGCFQDNGGCGYVLKPAFLRDPNTTFNSRALTQGPWWRPERLRVRIISGQQLPKVNKNKNSIVDPKVIVEIHGVGRDTGSRQTAVITNNGFNPRWDMEFEFEVTVPDLALVRFMVEDYDSSSKNDFIGQSTIPWNSLKQGYRHVHLLSKNGDQHPSATLFVKISIQD.

Positions 21–130 (ALLKGSQLLK…WVQGLRKIIH (110 aa)) constitute a PH domain. The interval 30-57 (KVKSSSWRRERFYKLQEDCKTIWQESRK) is substrate binding. 2 consecutive EF-hand domains span residues 140 to 175 (KLQHWIHSCLRKADKNKDNKMNFKELKDFLKELNIQ) and 176 to 211 (VDDGYARKIFRECDHSQTDSLEDEEIETFYKMLTQR). Ca(2+)-binding residues include Asp153, Asn155, Asp157, Lys159, Glu164, Asp189, Ser191, Thr193, Ser195, and Glu200. Ser191 is a glycosylation site (O-linked (GlcNAc) serine). An O-linked (GlcNAc) threonine glycan is attached at Thr193. Residues 296–440 (QDMDQPLSHY…LKGKILLKGK (145 aa)) form the PI-PLC X-box domain. The active site involves His311. Residues Asn312, Glu341, and Asp343 each coordinate Ca(2+). His356 is a catalytic residue. Position 390 (Glu390) interacts with Ca(2+). Lys438 and Lys440 together coordinate substrate. Thr457 bears the Phosphothreonine mark. A Phosphoserine modification is found at Ser460. The PI-PLC Y-box domain occupies 492 to 609 (LSDMIIYCKS…GYVLKPAFLR (118 aa)). Ser522 and Arg549 together coordinate substrate. The region spanning 609–737 (RDPNTTFNSR…QGYRHVHLLS (129 aa)) is the C2 domain. Positions 651, 653, 677, 706, 707, and 708 each coordinate Ca(2+).

In terms of assembly, interacts with TGM2. Ca(2+) serves as cofactor.

It catalyses the reaction a 1,2-diacyl-sn-glycero-3-phospho-(1D-myo-inositol-4,5-bisphosphate) + H2O = 1D-myo-inositol 1,4,5-trisphosphate + a 1,2-diacyl-sn-glycerol + H(+). The catalysed reaction is a 1,2-diacyl-sn-glycero-3-phospho-(1D-myo-inositol) + H2O = 1D-myo-inositol 1-phosphate + a 1,2-diacyl-sn-glycerol + H(+). The production of the second messenger molecules diacylglycerol (DAG) and inositol 1,4,5-trisphosphate (IP3) is mediated by activated phosphatidylinositol-specific phospholipase C enzymes. Essential for trophoblast and placental development. Binds phosphatidylinositol 4,5-bisphosphate. The sequence is that of 1-phosphatidylinositol 4,5-bisphosphate phosphodiesterase delta-1 from Rattus norvegicus (Rat).